A 228-amino-acid polypeptide reads, in one-letter code: Cytidylate kinase (228 aa).

An ATP-binding site is contributed by 17–25; that stretch reads GPTASGKGT.

This sequence belongs to the cytidylate kinase family. Type 1 subfamily.

Its subcellular location is the cytoplasm. The catalysed reaction is CMP + ATP = CDP + ADP. It carries out the reaction dCMP + ATP = dCDP + ADP. The protein is Cytidylate kinase of Burkholderia ambifaria (strain MC40-6).